Reading from the N-terminus, the 680-residue chain is Zinc finger protein 263 (680 aa).

A Glycyl lysine isopeptide (Lys-Gly) (interchain with G-Cter in SUMO2) cross-link involves residue K19. An SCAN box domain is found at 43-125 (HLRFRRFRFQ…TLVERMQKEL (83 aa)). Residues 147–191 (LPLETAGESPSFKLEPMETERSPGPRLQELLDPSPQRDSQAVKER) form a disordered region. K159 is covalently cross-linked (Glycyl lysine isopeptide (Lys-Gly) (interchain with G-Cter in SUMO2)). Phosphoserine is present on residues S168 and S180. Residues K286, K300, and K376 each participate in a glycyl lysine isopeptide (Lys-Gly) (interchain with G-Cter in SUMO2) cross-link. 5 consecutive C2H2-type zinc fingers follow at residues 378–400 (HLCALCGKNFSNNSNLIRHQRIH), 434–456 (HKCLECGKCFSQNTHLTRHQRTH), 462–484 (FQCNACGKSFSCNSNLNRHQRTH), 490–512 (YKCPECGEIFAHSSNLLRHQRIH), and 518–540 (YRCSECGKSFSRSSHLVIHERTH). Glycyl lysine isopeptide (Lys-Gly) (interchain with G-Cter in SUMO2) cross-links involve residues K570 and K579. 4 C2H2-type zinc fingers span residues 572-594 (FECSTCGKSFRQGMHLTRHQRTH), 600-622 (YKCILCGENFSHRSNLIRHQRIH), 628-650 (YTCHECGDSFSHSSNRIRHLRTH), and 656-678 (YKCSECGESFSRSSRLTSHQRTH).

It belongs to the krueppel C2H2-type zinc-finger protein family. Interacts with a number of proteins involved in chromatin modification and transcriptional corepression including DNMT1, DNMT3A, HDAC2, PHF8, TRIM28/KAP1, SETDB1, EZH2, UHRF1, CBX3/HP1-gamma, and CBX5/HP1-alpha; recruits these proteins to the SIX3 promoter region, leading to SIX3 transcriptional repression. Interacts with MAPK3/ERK1 and MAPK1/ERK2. Ubiquitinated, leading to proteasomal degradation. As to expression, expressed in Purkinje cells in the brain (at protein level).

It is found in the nucleus. Functionally, transcription factor that binds to the consensus sequence 5'-TCCTCCC-3' and acts as a transcriptional repressor. Binds to the promoter region of SIX3 and recruits other proteins involved in chromatin modification and transcriptional corepression, resulting in methylation of the promoter and transcriptional repression. Acts as a transcriptional repressor of HS3ST1 and HS3ST3A1 via binding to gene promoter regions. This chain is Zinc finger protein 263, found in Mus musculus (Mouse).